Here is a 699-residue protein sequence, read N- to C-terminus: Bifunctional protein GAL10 (699 aa).

The interval 1–357 is galactowaldenase; sequence MTAQLQSEST…TTENPFGYQL (357 aa). An NAD(+)-binding site is contributed by 13–44; it reads IVLVTGGAGYIGSHTVVELIENGYDCVVADNL. Residues 358-699 are mutarotase; it reads RGVEARFSAE…YGSKIVYRFS (342 aa). Residue His-537 is the For mutarotase activity of the active site. Ser-562 is modified (phosphoserine).

The protein in the N-terminal section; belongs to the NAD(P)-dependent epimerase/dehydratase family. It in the C-terminal section; belongs to the aldose epimerase family. NAD(+) is required as a cofactor.

It catalyses the reaction UDP-alpha-D-glucose = UDP-alpha-D-galactose. It carries out the reaction alpha-D-glucose = beta-D-glucose. Its pathway is carbohydrate metabolism; galactose metabolism. It participates in carbohydrate metabolism; hexose metabolism. In terms of biological role, mutarotase converts alpha-aldose to the beta-anomer. It is active on D-glucose, L-arabinose, D-xylose, D-galactose, maltose and lactose. This chain is Bifunctional protein GAL10 (GAL10), found in Saccharomyces cerevisiae (strain ATCC 204508 / S288c) (Baker's yeast).